The sequence spans 403 residues: Coenzyme A biosynthesis bifunctional protein CoaBC (403 aa).

The tract at residues 1-197 (MLHHVKLIYA…LHPKSLEGKR (197 aa)) is phosphopantothenoylcysteine decarboxylase. The interval 198–403 (VLVTAGATRE…RLWDEIEKML (206 aa)) is phosphopantothenate--cysteine ligase. The CTP site is built by D287, K297, and F330.

It in the N-terminal section; belongs to the HFCD (homo-oligomeric flavin containing Cys decarboxylase) superfamily. In the C-terminal section; belongs to the PPC synthetase family. Mg(2+) is required as a cofactor. FMN serves as cofactor.

The enzyme catalyses N-[(R)-4-phosphopantothenoyl]-L-cysteine + H(+) = (R)-4'-phosphopantetheine + CO2. The catalysed reaction is (R)-4'-phosphopantothenate + L-cysteine + CTP = N-[(R)-4-phosphopantothenoyl]-L-cysteine + CMP + diphosphate + H(+). It functions in the pathway cofactor biosynthesis; coenzyme A biosynthesis. Catalyzes two sequential steps in the biosynthesis of coenzyme A. In the first step cysteine is conjugated to 4'-phosphopantothenate to form 4-phosphopantothenoylcysteine. In the second step the latter compound is decarboxylated to form 4'-phosphopantotheine. The sequence is that of Coenzyme A biosynthesis bifunctional protein CoaBC from Thermococcus kodakarensis (strain ATCC BAA-918 / JCM 12380 / KOD1) (Pyrococcus kodakaraensis (strain KOD1)).